We begin with the raw amino-acid sequence, 431 residues long: Reticulon-like protein B17 (431 aa).

2 disordered regions span residues Met1–Val110 and Pro126–Asp152. A compositionally biased stretch (polar residues) spans Thr12–Asn26. Basic residues predominate over residues Pro126–Lys138. The span at Ser142–Asp152 shows a compositional bias: polar residues. Residues Ile168–Ile355 form the Reticulon domain. 4 helical membrane-spanning segments follow: residues Val177–Ala197, Phe202–Ser222, Tyr286–Ile306, and Phe349–Phe369. Residues Glu382 to Gln415 are compositionally biased toward acidic residues. Residues Glu382 to Arg422 form a disordered region.

It localises to the endoplasmic reticulum membrane. The polypeptide is Reticulon-like protein B17 (RTNLB17) (Arabidopsis thaliana (Mouse-ear cress)).